Reading from the N-terminus, the 286-residue chain is Putative type II secretion system L-type protein YghE (286 aa).

The chain crosses the membrane as a helical span at residues 136 to 156 (VMILPILLILVALAVERGVTL).

The protein belongs to the GSP L family.

It localises to the cell inner membrane. Involved in a type II secretion system (T2SS, formerly general secretion pathway, GSP) for the export of folded proteins across the outer membrane. This chain is Putative type II secretion system L-type protein YghE, found in Escherichia coli (strain K12).